A 210-amino-acid polypeptide reads, in one-letter code: tRNA (guanine-N(7)-)-methyltransferase (210 aa).

Residues E36, E61, D90, and D112 each coordinate S-adenosyl-L-methionine. Residue D112 is part of the active site. Substrate-binding positions include K116, D148, and 188-191 (TEYE).

The protein belongs to the class I-like SAM-binding methyltransferase superfamily. TrmB family.

The enzyme catalyses guanosine(46) in tRNA + S-adenosyl-L-methionine = N(7)-methylguanosine(46) in tRNA + S-adenosyl-L-homocysteine. Its pathway is tRNA modification; N(7)-methylguanine-tRNA biosynthesis. Functionally, catalyzes the formation of N(7)-methylguanine at position 46 (m7G46) in tRNA. This is tRNA (guanine-N(7)-)-methyltransferase from Mycoplasma genitalium (strain ATCC 33530 / DSM 19775 / NCTC 10195 / G37) (Mycoplasmoides genitalium).